A 51-amino-acid chain; its full sequence is uncharacterized protein (51 aa).

This protein is non-essential for virus function. This is an uncharacterized protein from Sulfolobus spindle-shape virus 1 (SSV1).